The chain runs to 87 residues: Defensin-like protein 100 (87 aa).

Residues Met1–Gly29 form the signal peptide. Disulfide bonds link Cys31/Cys79, Cys38/Cys64, Cys44/Cys76, and Cys48/Cys78.

It belongs to the DEFL family.

The protein localises to the secreted. This is Defensin-like protein 100 from Arabidopsis thaliana (Mouse-ear cress).